Consider the following 178-residue polypeptide: ATP synthase subunit delta (178 aa).

It belongs to the ATPase delta chain family. As to quaternary structure, F-type ATPases have 2 components, F(1) - the catalytic core - and F(0) - the membrane proton channel. F(1) has five subunits: alpha(3), beta(3), gamma(1), delta(1), epsilon(1). F(0) has three main subunits: a(1), b(2) and c(10-14). The alpha and beta chains form an alternating ring which encloses part of the gamma chain. F(1) is attached to F(0) by a central stalk formed by the gamma and epsilon chains, while a peripheral stalk is formed by the delta and b chains.

The protein localises to the cell inner membrane. Its function is as follows. F(1)F(0) ATP synthase produces ATP from ADP in the presence of a proton or sodium gradient. F-type ATPases consist of two structural domains, F(1) containing the extramembraneous catalytic core and F(0) containing the membrane proton channel, linked together by a central stalk and a peripheral stalk. During catalysis, ATP synthesis in the catalytic domain of F(1) is coupled via a rotary mechanism of the central stalk subunits to proton translocation. Functionally, this protein is part of the stalk that links CF(0) to CF(1). It either transmits conformational changes from CF(0) to CF(1) or is implicated in proton conduction. This is ATP synthase subunit delta from Acinetobacter baumannii (strain SDF).